A 391-amino-acid chain; its full sequence is MNYQPTPEDRFTFGLWTVGWEGRDPFGDATRTALDPVESVRRLAELGAHGVTFHDDDLIPFGSSDSERYEHVKRFRQALDDTGMKVPMATTNLFTHPVFKDGGFTANDRDVRRYALRKTIRNIDLAVELGAETYVAWGGREGAESGGAKDVRDALDRMKEAFDLLGEYVTSQGYDIRFAIEPKPNEPRGDILLPTVGHALAFIERLERPELYGVNPEVGHEQMAGLNFPHGIAQALWAGKLFHIDLNGQNGIKYDQDLRFGAGDLRAAFWLVDLLESAGYSGPRHFDFKPPRTEDFDGVWASAAGCMRNYLILKERAAAFRADPEVQEALRASRLDELARPTAADGLQALLDDRSAFEEFDVDAAAARGMAFERLDQLAMDHLLGARGAAA.

Residues H54 and D57 contribute to the active site. 7 residues coordinate Mg(2+): E181, E217, H220, D245, D255, D257, and D287.

Belongs to the xylose isomerase family. Homotetramer. Requires Mg(2+) as cofactor.

It is found in the cytoplasm. It catalyses the reaction alpha-D-xylose = alpha-D-xylulofuranose. Involved in D-xylose catabolism. The chain is Xylose isomerase (xylA) from Streptomyces albus G.